We begin with the raw amino-acid sequence, 280 residues long: Pantothenate synthetase (280 aa).

Residue 32–39 (MGALHAGH) participates in ATP binding. The active-site Proton donor is the histidine 39. Residue glutamine 63 coordinates (R)-pantoate. A beta-alanine-binding site is contributed by glutamine 63. 149-152 (GEKD) provides a ligand contact to ATP. Residue glutamine 155 coordinates (R)-pantoate. ATP is bound by residues valine 178 and 186–189 (MSSR).

It belongs to the pantothenate synthetase family. Homodimer.

The protein resides in the cytoplasm. The enzyme catalyses (R)-pantoate + beta-alanine + ATP = (R)-pantothenate + AMP + diphosphate + H(+). The protein operates within cofactor biosynthesis; (R)-pantothenate biosynthesis; (R)-pantothenate from (R)-pantoate and beta-alanine: step 1/1. Catalyzes the condensation of pantoate with beta-alanine in an ATP-dependent reaction via a pantoyl-adenylate intermediate. The protein is Pantothenate synthetase of Ruegeria sp. (strain TM1040) (Silicibacter sp.).